Consider the following 293-residue polypeptide: Protease HtpX (293 aa).

2 helical membrane-spanning segments follow: residues Ile4–Leu24 and Val32–Leu52. His139 lines the Zn(2+) pocket. Glu140 is a catalytic residue. A Zn(2+)-binding site is contributed by His143. A run of 2 helical transmembrane segments spans residues Val158 to Leu178 and Leu193 to Ile213. Glu222 lines the Zn(2+) pocket.

The protein belongs to the peptidase M48B family. Requires Zn(2+) as cofactor.

Its subcellular location is the cell inner membrane. In Cronobacter sakazakii (strain ATCC BAA-894) (Enterobacter sakazakii), this protein is Protease HtpX.